Here is a 197-residue protein sequence, read N- to C-terminus: Holliday junction branch migration complex subunit RuvA (197 aa).

The domain I stretch occupies residues 1–63; the sequence is MISSLRGEVL…EDSMTLYGFV (63 aa). The domain II stretch occupies residues 64–139; it reads DGETRDLFLT…KVGPAGSAAT (76 aa). The segment at 139–143 is flexible linker; it reads TAPAV. The tract at residues 144-197 is domain III; sequence NGHTVRAPVVEALVGLGFAAKQAEEATDKVLAGDGEATTSSALRAALSLLGKAR.

This sequence belongs to the RuvA family. In terms of assembly, homotetramer. Forms an RuvA(8)-RuvB(12)-Holliday junction (HJ) complex. HJ DNA is sandwiched between 2 RuvA tetramers; dsDNA enters through RuvA and exits via RuvB. An RuvB hexamer assembles on each DNA strand where it exits the tetramer. Each RuvB hexamer is contacted by two RuvA subunits (via domain III) on 2 adjacent RuvB subunits; this complex drives branch migration. In the full resolvosome a probable DNA-RuvA(4)-RuvB(12)-RuvC(2) complex forms which resolves the HJ.

The protein localises to the cytoplasm. Functionally, the RuvA-RuvB-RuvC complex processes Holliday junction (HJ) DNA during genetic recombination and DNA repair, while the RuvA-RuvB complex plays an important role in the rescue of blocked DNA replication forks via replication fork reversal (RFR). RuvA specifically binds to HJ cruciform DNA, conferring on it an open structure. The RuvB hexamer acts as an ATP-dependent pump, pulling dsDNA into and through the RuvAB complex. HJ branch migration allows RuvC to scan DNA until it finds its consensus sequence, where it cleaves and resolves the cruciform DNA. The protein is Holliday junction branch migration complex subunit RuvA of Mycobacterium marinum (strain ATCC BAA-535 / M).